Consider the following 676-residue polypeptide: Methionine--tRNA ligase (676 aa).

A 'HIGH' region motif is present at residues 15-25 (PYANGPIHLGH). Residues C146, C149, C159, and C162 each contribute to the Zn(2+) site. The short motif at 332 to 336 (KMSKS) is the 'KMSKS' region element. K335 is a binding site for ATP. The tRNA-binding domain maps to 575-676 (DFAKIDLRIA…EGAQPGMRVK (102 aa)).

The protein belongs to the class-I aminoacyl-tRNA synthetase family. MetG type 1 subfamily. Homodimer. The cofactor is Zn(2+).

It is found in the cytoplasm. The enzyme catalyses tRNA(Met) + L-methionine + ATP = L-methionyl-tRNA(Met) + AMP + diphosphate. In terms of biological role, is required not only for elongation of protein synthesis but also for the initiation of all mRNA translation through initiator tRNA(fMet) aminoacylation. The protein is Methionine--tRNA ligase of Shewanella sp. (strain MR-7).